The chain runs to 382 residues: Mannitol-1-phosphate 5-dehydrogenase (382 aa).

3-14 lines the NAD(+) pocket; it reads ALHFGAGNIGRG. An N6-acetyllysine modification is found at K269.

It belongs to the mannitol dehydrogenase family.

The enzyme catalyses D-mannitol 1-phosphate + NAD(+) = beta-D-fructose 6-phosphate + NADH + H(+). The polypeptide is Mannitol-1-phosphate 5-dehydrogenase (Escherichia coli O45:K1 (strain S88 / ExPEC)).